Here is a 296-residue protein sequence, read N- to C-terminus: Urease accessory protein UreD (296 aa).

It belongs to the UreD family. UreD, UreF and UreG form a complex that acts as a GTP-hydrolysis-dependent molecular chaperone, activating the urease apoprotein by helping to assemble the nickel containing metallocenter of UreC. The UreE protein probably delivers the nickel.

The protein localises to the cytoplasm. Required for maturation of urease via the functional incorporation of the urease nickel metallocenter. This Janthinobacterium sp. (strain Marseille) (Minibacterium massiliensis) protein is Urease accessory protein UreD.